The chain runs to 901 residues: Putative serine/threonine-protein kinase YPL150W (901 aa).

A Protein kinase domain is found at Y41–L287. ATP contacts are provided by residues I47–V55 and K70. Catalysis depends on D157, which acts as the Proton acceptor. Phosphoserine is present on S456. Residues A500–S530 are disordered. S533 carries the post-translational modification Phosphoserine. The segment covering S588 to T599 has biased composition (low complexity). 2 disordered regions span residues S588–L629 and T745–R770. The segment covering G600–I613 has biased composition (polar residues). Basic residues predominate over residues R759–R770.

The protein belongs to the protein kinase superfamily. Ser/Thr protein kinase family.

The catalysed reaction is L-seryl-[protein] + ATP = O-phospho-L-seryl-[protein] + ADP + H(+). It carries out the reaction L-threonyl-[protein] + ATP = O-phospho-L-threonyl-[protein] + ADP + H(+). In terms of biological role, putative serine/threonine-protein kinase. The chain is Putative serine/threonine-protein kinase YPL150W from Saccharomyces cerevisiae (strain ATCC 204508 / S288c) (Baker's yeast).